A 159-amino-acid polypeptide reads, in one-letter code: Probable metallophosphoesterase MPN_126 (159 aa).

Residues aspartate 9, histidine 11, aspartate 34, asparagine 53, histidine 75, histidine 107, and histidine 109 each coordinate Mn(2+).

The protein belongs to the metallophosphoesterase superfamily. YfcE family. The cofactor is Mn(2+).

This chain is Probable metallophosphoesterase MPN_126, found in Mycoplasma pneumoniae (strain ATCC 29342 / M129 / Subtype 1) (Mycoplasmoides pneumoniae).